Reading from the N-terminus, the 563-residue chain is Germacrene C/D synthase (563 aa).

The segment at 1-22 (MESCLSVSSAPPPKKNIQEPVR) is disordered. The Mg(2+) site is built by Asp315, Asp319, and Glu468. The short motif at 315–319 (DDTYD) is the DDXXD motif element.

The protein belongs to the terpene synthase family. Mg(2+) is required as a cofactor. Predominantly expressed in root.

The enzyme catalyses (2E,6E)-farnesyl diphosphate = germacrene C + diphosphate. It carries out the reaction (2E,6E)-farnesyl diphosphate = (-)-germacrene D + diphosphate. In terms of biological role, mediates formation of germacrene C and germacrene D using farnesyl diphosphate as substrate. Can also catalyze formation of trace of germacrene B. This Valeriana officinalis (Valerian) protein is Germacrene C/D synthase (TPS1).